A 382-amino-acid chain; its full sequence is Protein PEP-RELATED DEVELOPMENT ARRESTED 1 homolog, chloroplastic (382 aa).

The N-terminal 44 residues, 1–44, are a transit peptide targeting the chloroplast; the sequence is MAILPLSISHSLTSALSATSSGIGRPVARLLHPRVPSRPTVICL.

It is found in the plastid. The protein localises to the chloroplast stroma. The protein resides in the chloroplast nucleoid. Plays an essential role in early steps of chloroplast development. May be involved in the redox control of plastid gene expression by maintening the redox state around chloroplast nucleoids. May positively regulate plastid-encoded RNA polymerase (PEP) activity. This chain is Protein PEP-RELATED DEVELOPMENT ARRESTED 1 homolog, chloroplastic, found in Oryza sativa subsp. japonica (Rice).